Here is a 305-residue protein sequence, read N- to C-terminus: Pseudouridine-5'-phosphate glycosidase (305 aa).

The active-site Proton donor is Glu-30. Substrate contacts are provided by Lys-91 and Val-111. Asp-143 contacts Mn(2+). Position 145-147 (Ser-145–Asp-147) interacts with substrate. The active-site Nucleophile is the Lys-164.

The protein belongs to the pseudouridine-5'-phosphate glycosidase family. Homotrimer. The cofactor is Mn(2+).

The catalysed reaction is D-ribose 5-phosphate + uracil = psi-UMP + H2O. Its function is as follows. Catalyzes the reversible cleavage of pseudouridine 5'-phosphate (PsiMP) to ribose 5-phosphate and uracil. Functions biologically in the cleavage direction, as part of a pseudouridine degradation pathway. The polypeptide is Pseudouridine-5'-phosphate glycosidase (Mesorhizobium japonicum (strain LMG 29417 / CECT 9101 / MAFF 303099) (Mesorhizobium loti (strain MAFF 303099))).